A 294-amino-acid polypeptide reads, in one-letter code: UDP-3-O-acyl-N-acetylglucosamine deacetylase (294 aa).

Zn(2+) contacts are provided by His-75, His-232, and Asp-236. His-259 (proton donor) is an active-site residue.

The protein belongs to the LpxC family. Zn(2+) serves as cofactor.

The enzyme catalyses a UDP-3-O-[(3R)-3-hydroxyacyl]-N-acetyl-alpha-D-glucosamine + H2O = a UDP-3-O-[(3R)-3-hydroxyacyl]-alpha-D-glucosamine + acetate. Its pathway is glycolipid biosynthesis; lipid IV(A) biosynthesis; lipid IV(A) from (3R)-3-hydroxytetradecanoyl-[acyl-carrier-protein] and UDP-N-acetyl-alpha-D-glucosamine: step 2/6. Its function is as follows. Catalyzes the hydrolysis of UDP-3-O-myristoyl-N-acetylglucosamine to form UDP-3-O-myristoylglucosamine and acetate, the committed step in lipid A biosynthesis. The sequence is that of UDP-3-O-acyl-N-acetylglucosamine deacetylase from Campylobacter jejuni subsp. jejuni serotype O:23/36 (strain 81-176).